A 206-amino-acid polypeptide reads, in one-letter code: Bacterial microcompartment protein trimer-3 (206 aa).

BMC circularly permuted domains follow at residues 2 to 104 (ELRA…RLAP) and 105 to 206 (RVVS…DNRG). Residues 67–68 (ER) carry the Pore gating residues motif.

It belongs to the EutL/PduB family. Homotrimerizes to form a pseudohexamer. These stack, with the concave faces together, with the concave faces together, in purified bacterial microcompartments (BMC).

It is found in the bacterial microcompartment. Its function is as follows. A minor component of the bacterial microcompartment (BMC) shell. Expression of 5 proteins in E.coli (BMC-H (Hoch_5815), BMC-P (Hoch_5814), and 3 BMC-T (Hoch_5812, Hoch_5816, Hoch_3341)) forms 40 nm artificial BMCs with a molecular mass of 6.5 MDa. One of 2 stacked pseudohexamers in the BMC. There are 20 BMC-T pseudohexamers per BMC, composed of mixed BMC-T1, BMC-T2 and BMC-T3. The shell facets are 20-30 Angstroms thick, with 1 of the stacked BMC-T trimers protruding to the exterior. The stacked trimers may serve as conduits to allow metabolite flux across the protein shell, gated by Arg-68 which contacts Glu-67 in an adjacent subunit; they are flexible enough to play a role in accommodating variations in shell assembly. The protein is Bacterial microcompartment protein trimer-3 of Haliangium ochraceum (strain DSM 14365 / JCM 11303 / SMP-2).